A 277-amino-acid polypeptide reads, in one-letter code: Adenylate kinase (277 aa).

72-77 (GAGKGT) is an ATP binding site. The segment at 92–121 (ATGDMLRSQVAKQTALGVQAKKIMDQGGLV) is NMP. Residues Thr93, Arg98, 119-121 (GLV), 148-151 (GFPR), and Gln155 each bind AMP. The segment at 189–226 (GRLVHPASGRSYHKLFNPPKVAMTDDVTGDPLVQRSDD) is LID. ATP contacts are provided by residues Arg190 and 199-200 (SY). AMP-binding residues include Arg223 and Arg234. Gln262 contacts ATP.

The protein belongs to the adenylate kinase family. AK2 subfamily. In terms of assembly, monomer.

Its subcellular location is the cytoplasm. The protein localises to the cytosol. It localises to the mitochondrion intermembrane space. It carries out the reaction AMP + ATP = 2 ADP. In terms of biological role, catalyzes the reversible transfer of the terminal phosphate group between ATP and AMP. Plays an important role in cellular energy homeostasis and in adenine nucleotide metabolism. Adenylate kinase activity is critical for regulation of the phosphate utilization and the AMP de novo biosynthesis pathways. The protein is Adenylate kinase of Eremothecium gossypii (strain ATCC 10895 / CBS 109.51 / FGSC 9923 / NRRL Y-1056) (Yeast).